The sequence spans 303 residues: MGVVLITVVTVVDRHKALPNSSIDVDGHLWEFLSRQCFVLASEPLGIPIVVRSADLYRFSSSLLTLPKACRPIVRTRGDTAIALDRNGVVYHEDRMGVSIEWLSVLSGYNHLNSSLIINQPYHLWVLGAADLCKPVFDLIPGPKRMVYAEIADEFHKSWQPPFVCGKLFETIPWTTVEHNHPLKLRAAGGEDTVVGECGFSKHSSNSLVHPPTVNRVIYAVVDPARLREIPAPGRPLPRRRPSEGGMRAPRRRSRAPAPARSTAAAATPPRPGDPRAPAARRAGDVTWMERLLWGVFGRTSTR.

Residues 230–284 (IPAPGRPLPRRRPSEGGMRAPRRRSRAPAPARSTAAAATPPRPGDPRAPAARRAG) are disordered. A compositionally biased stretch (low complexity) spans 256–268 (APAPARSTAAAAT).

This sequence belongs to the herpesviridae US2 family.

In Equine herpesvirus 1 (strain Kentucky A) (EHV-1), this protein is US1 protein (US1).